The following is a 475-amino-acid chain: Sulfate adenylyltransferase subunit 1 (475 aa).

The tr-type G domain maps to 25-239; it reads KSLLRFLTCG…EVLETVEIQR (215 aa). The G1 stretch occupies residues 34–41; that stretch reads GSVDDGKS. 34–41 contributes to the GTP binding site; the sequence is GSVDDGKS. The interval 92–96 is G2; the sequence is GITID. The interval 113-116 is G3; that stretch reads DTPG. Residues 113–117 and 168–171 contribute to the GTP site; these read DTPGH and NKMD. The tract at residues 168–171 is G4; that stretch reads NKMD. The interval 206–208 is G5; that stretch reads SAL.

The protein belongs to the TRAFAC class translation factor GTPase superfamily. Classic translation factor GTPase family. CysN/NodQ subfamily. In terms of assembly, heterodimer composed of CysD, the smaller subunit, and CysN.

It catalyses the reaction sulfate + ATP + H(+) = adenosine 5'-phosphosulfate + diphosphate. It functions in the pathway sulfur metabolism; hydrogen sulfide biosynthesis; sulfite from sulfate: step 1/3. In terms of biological role, with CysD forms the ATP sulfurylase (ATPS) that catalyzes the adenylation of sulfate producing adenosine 5'-phosphosulfate (APS) and diphosphate, the first enzymatic step in sulfur assimilation pathway. APS synthesis involves the formation of a high-energy phosphoric-sulfuric acid anhydride bond driven by GTP hydrolysis by CysN coupled to ATP hydrolysis by CysD. The chain is Sulfate adenylyltransferase subunit 1 from Escherichia coli O17:K52:H18 (strain UMN026 / ExPEC).